We begin with the raw amino-acid sequence, 59 residues long: Venom protein 37.1 (59 aa).

The N-terminal stretch at 1–18 (MVSTLMIASVKLRLYCTA) is a signal peptide.

This sequence belongs to the non-disulfide-bridged peptide (NDBP) superfamily. Long chain multifunctional peptide (group 2) family. Expressed by the venom gland.

Its subcellular location is the secreted. The polypeptide is Venom protein 37.1 (Lychas mucronatus (Chinese swimming scorpion)).